We begin with the raw amino-acid sequence, 36 residues long: Photosystem I reaction center subunit VIII (36 aa).

Residues 9 to 29 (ILVPLVGLIFPALSMALLFIY) form a helical membrane-spanning segment.

The protein belongs to the PsaI family.

The protein localises to the plastid. The protein resides in the chloroplast thylakoid membrane. Its function is as follows. May help in the organization of the PsaL subunit. The chain is Photosystem I reaction center subunit VIII from Pyropia yezoensis (Susabi-nori).